A 182-amino-acid polypeptide reads, in one-letter code: Flagellar transcriptional regulator FlhC (182 aa).

4 residues coordinate Zn(2+): Cys138, Cys141, Cys158, and Cys161.

The protein belongs to the FlhC family. As to quaternary structure, heterohexamer composed of two FlhC and four FlhD subunits. Each FlhC binds a FlhD dimer, forming a heterotrimer, and a hexamer assembles by dimerization of two heterotrimers. The cofactor is Zn(2+).

The protein localises to the cytoplasm. Its function is as follows. Functions in complex with FlhD as a master transcriptional regulator that regulates transcription of several flagellar and non-flagellar operons by binding to their promoter region. Activates expression of class 2 flagellar genes, including fliA, which is a flagellum-specific sigma factor that turns on the class 3 genes. Also regulates genes whose products function in a variety of physiological pathways. The chain is Flagellar transcriptional regulator FlhC from Gallionella capsiferriformans (strain ES-2) (Gallionella ferruginea capsiferriformans (strain ES-2)).